An 88-amino-acid polypeptide reads, in one-letter code: MYLTKEIKEEIFAKHGEKTNTGKAEAQIALFTFRISHLTEHLKKNRHDYNTERSLVLLVGKRRSLLDYLKKKEINRYREIIKELGIRK.

The protein belongs to the universal ribosomal protein uS15 family. Part of the 30S ribosomal subunit. Forms a bridge to the 50S subunit in the 70S ribosome, contacting the 23S rRNA.

One of the primary rRNA binding proteins, it binds directly to 16S rRNA where it helps nucleate assembly of the platform of the 30S subunit by binding and bridging several RNA helices of the 16S rRNA. Its function is as follows. Forms an intersubunit bridge (bridge B4) with the 23S rRNA of the 50S subunit in the ribosome. This is Small ribosomal subunit protein uS15 from Flavobacterium psychrophilum (strain ATCC 49511 / DSM 21280 / CIP 103535 / JIP02/86).